We begin with the raw amino-acid sequence, 157 residues long: UPF0251 protein CLD_3165 (157 aa).

It belongs to the UPF0251 family.

This is UPF0251 protein CLD_3165 from Clostridium botulinum (strain Okra / Type B1).